Reading from the N-terminus, the 398-residue chain is Acetate kinase 1 (398 aa).

Asn-9 provides a ligand contact to Mg(2+). Lys-16 contacts ATP. Substrate is bound at residue Arg-89. Asp-146 (proton donor/acceptor) is an active-site residue. ATP is bound by residues 206 to 210 (HLGNG), 281 to 283 (DCR), and 329 to 333 (GIGEN). Glu-384 contacts Mg(2+).

The protein belongs to the acetokinase family. As to quaternary structure, homodimer. The cofactor is Mg(2+). It depends on Mn(2+) as a cofactor.

It localises to the cytoplasm. The enzyme catalyses acetate + ATP = acetyl phosphate + ADP. It functions in the pathway metabolic intermediate biosynthesis; acetyl-CoA biosynthesis; acetyl-CoA from acetate: step 1/2. In terms of biological role, catalyzes the formation of acetyl phosphate from acetate and ATP. Can also catalyze the reverse reaction. This Vibrio parahaemolyticus serotype O3:K6 (strain RIMD 2210633) protein is Acetate kinase 1.